The sequence spans 349 residues: GTP 3',8-cyclase (349 aa).

A Radical SAM core domain is found at 24-249 (PFGRAITYLR…VDSDYQTGGP (226 aa)). R33 lines the GTP pocket. Positions 40 and 44 each coordinate [4Fe-4S] cluster. Y46 lines the S-adenosyl-L-methionine pocket. [4Fe-4S] cluster is bound at residue C47. A GTP-binding site is contributed by R82. An S-adenosyl-L-methionine-binding site is contributed by G86. GTP is bound at residue T116. S140 contributes to the S-adenosyl-L-methionine binding site. A GTP-binding site is contributed by K176. Position 210 (M210) interacts with S-adenosyl-L-methionine. The [4Fe-4S] cluster site is built by C273 and C276. 278 to 280 (RVR) is a binding site for GTP. Position 290 (C290) interacts with [4Fe-4S] cluster.

The protein belongs to the radical SAM superfamily. MoaA family. In terms of assembly, monomer and homodimer. [4Fe-4S] cluster is required as a cofactor.

The enzyme catalyses GTP + AH2 + S-adenosyl-L-methionine = (8S)-3',8-cyclo-7,8-dihydroguanosine 5'-triphosphate + 5'-deoxyadenosine + L-methionine + A + H(+). The protein operates within cofactor biosynthesis; molybdopterin biosynthesis. Catalyzes the cyclization of GTP to (8S)-3',8-cyclo-7,8-dihydroguanosine 5'-triphosphate. The sequence is that of GTP 3',8-cyclase from Agrobacterium fabrum (strain C58 / ATCC 33970) (Agrobacterium tumefaciens (strain C58)).